Here is a 243-residue protein sequence, read N- to C-terminus: MEQGSGRLEDFPVNVFSVTPYTPSTADIQVSDDDKAGATLLFSGIFLGLVGITFTVMGWIKYQGVSHFEWTQLLGPVLLSVGVTFILIAVCKFKMLSCQLCKESEERVLDSEQTPGGPSFVFTGINQPITFHGATVVQYIPPPYGSPEPVGINTSYLQSVVSPCSLITSGGAAAAMSSPSQYYTIYPQDNSAFVVDEGCPSFADGGNHRPNPDADQLEETQLEEEACACFSPPPYEEIYSLPR.

Transmembrane regions (helical) follow at residues Leu40–Ile60 and Leu73–Phe93.

Interacts with SLC34A1; regulates SLC34A1 internalization by PTH and FGF23.

The protein localises to the endoplasmic reticulum membrane. It localises to the apical cell membrane. Functionally, regulator of plasma phosphate homeostasis. Decreases serum inorganic phosphate (Pi) uptake by regulating the sodium-phosphate cotransporter SLC34A1 trafficking by PTH and FGF23 in the kidney. This chain is Transmembrane protein 174 (TMEM174), found in Pongo abelii (Sumatran orangutan).